We begin with the raw amino-acid sequence, 428 residues long: Adenylosuccinate synthetase (428 aa).

GTP is bound by residues G12–K18 and G40–T42. Catalysis depends on D13, which acts as the Proton acceptor. Positions 13 and 40 each coordinate Mg(2+). Residues D13–K16, N38–H41, T128, R142, Q223, T238, and R302 contribute to the IMP site. The active-site Proton donor is the H41. Residue T298–R304 coordinates substrate. GTP-binding positions include R304, K330–D332, and S412–G414.

Belongs to the adenylosuccinate synthetase family. As to quaternary structure, homodimer. It depends on Mg(2+) as a cofactor.

The protein resides in the cytoplasm. The catalysed reaction is IMP + L-aspartate + GTP = N(6)-(1,2-dicarboxyethyl)-AMP + GDP + phosphate + 2 H(+). Its pathway is purine metabolism; AMP biosynthesis via de novo pathway; AMP from IMP: step 1/2. In terms of biological role, plays an important role in the de novo pathway of purine nucleotide biosynthesis. Catalyzes the first committed step in the biosynthesis of AMP from IMP. This is Adenylosuccinate synthetase from Brevibacillus brevis (strain 47 / JCM 6285 / NBRC 100599).